Reading from the N-terminus, the 322-residue chain is uncharacterized protein (322 aa).

Basic residues-rich tracts occupy residues 1–16 (MPGNSRRRGAVRKSGT) and 43–61 (LRPHHPAAKRARAQPRRPV). The tract at residues 1–69 (MPGNSRRRGA…PVKRADETET (69 aa)) is disordered. Residues Gly-261, Ile-281, and Leu-290 each coordinate S-adenosyl-L-methionine.

It belongs to the class IV-like SAM-binding methyltransferase superfamily. RNA methyltransferase TrmH family.

This is an uncharacterized protein from Mycobacterium bovis (strain ATCC BAA-935 / AF2122/97).